Reading from the N-terminus, the 528-residue chain is UDP-glucuronosyltransferase 2B30 (528 aa).

The N-terminal stretch at 1 to 23 (MSMKWTSALLLIQLSCYLSSGNC) is a signal peptide. Residue Lys135 is modified to N6-succinyllysine. N-linked (GlcNAc...) asparagine glycosylation occurs at Asn315. Residues 493 to 513 (VIGFLLACVATVIFIITKCLF) traverse the membrane as a helical segment.

It belongs to the UDP-glycosyltransferase family. In terms of tissue distribution, expressed in several tissues, including prostate, testis, mammary gland, kidney, adrenals and intestine.

It is found in the microsome membrane. The protein localises to the endoplasmic reticulum membrane. The catalysed reaction is glucuronate acceptor + UDP-alpha-D-glucuronate = acceptor beta-D-glucuronoside + UDP + H(+). UDPGTs are of major importance in the conjugation and subsequent elimination of potentially toxic xenobiotics and endogenous compounds. This isozyme has glucuronidating capacity on testosterone, dihydrotestosterone, 5-alpha-androstane-3-alpha,17-beta-diol, androsterone, oestradiol, tetrahydroaldosterone and tetrahydrocortisone. This enzyme is essential to inactivation of several steroids. The sequence is that of UDP-glucuronosyltransferase 2B30 (UGT2B30) from Macaca fascicularis (Crab-eating macaque).